The following is a 77-amino-acid chain: Large ribosomal subunit protein bL28 (77 aa).

Belongs to the bacterial ribosomal protein bL28 family.

This Polynucleobacter asymbioticus (strain DSM 18221 / CIP 109841 / QLW-P1DMWA-1) (Polynucleobacter necessarius subsp. asymbioticus) protein is Large ribosomal subunit protein bL28.